Here is a 72-residue protein sequence, read N- to C-terminus: Large ribosomal subunit protein bL31 (72 aa).

The protein belongs to the bacterial ribosomal protein bL31 family. Type A subfamily. Part of the 50S ribosomal subunit.

Binds the 23S rRNA. The chain is Large ribosomal subunit protein bL31 from Deinococcus geothermalis (strain DSM 11300 / CIP 105573 / AG-3a).